The primary structure comprises 613 residues: Dihydroxy-acid dehydratase (613 aa).

Asp81 contributes to the Mg(2+) binding site. [2Fe-2S] cluster is bound at residue Cys122. Mg(2+) is bound by residues Asp123 and Lys124. Lys124 carries the post-translational modification N6-carboxylysine. A [2Fe-2S] cluster-binding site is contributed by Cys195. Glu491 contacts Mg(2+). The active-site Proton acceptor is Ser517.

Belongs to the IlvD/Edd family. Homodimer. It depends on [2Fe-2S] cluster as a cofactor. Mg(2+) is required as a cofactor.

The enzyme catalyses (2R)-2,3-dihydroxy-3-methylbutanoate = 3-methyl-2-oxobutanoate + H2O. It carries out the reaction (2R,3R)-2,3-dihydroxy-3-methylpentanoate = (S)-3-methyl-2-oxopentanoate + H2O. It functions in the pathway amino-acid biosynthesis; L-isoleucine biosynthesis; L-isoleucine from 2-oxobutanoate: step 3/4. Its pathway is amino-acid biosynthesis; L-valine biosynthesis; L-valine from pyruvate: step 3/4. Functions in the biosynthesis of branched-chain amino acids. Catalyzes the dehydration of (2R,3R)-2,3-dihydroxy-3-methylpentanoate (2,3-dihydroxy-3-methylvalerate) into 2-oxo-3-methylpentanoate (2-oxo-3-methylvalerate) and of (2R)-2,3-dihydroxy-3-methylbutanoate (2,3-dihydroxyisovalerate) into 2-oxo-3-methylbutanoate (2-oxoisovalerate), the penultimate precursor to L-isoleucine and L-valine, respectively. This is Dihydroxy-acid dehydratase from Hyphomonas neptunium (strain ATCC 15444).